Consider the following 274-residue polypeptide: Cytochrome b-c1 complex subunit Rieske, mitochondrial (274 aa).

Residues 79 to 110 lie on the Mitochondrial matrix side of the membrane; the sequence is SHTDVKVPDFSDYRRAEVLDSTKSSKESSEAR. Residues 111–137 form a helical membrane-spanning segment; it reads KGFSYLVTATTTVGVAYAAKNVVSQFV. Topologically, residues 138 to 274 are mitochondrial intermembrane; the sequence is SSMSASADVL…FTSDDVVVVG (137 aa). The region spanning 187 to 272 is the Rieske domain; that stretch reads EAAVEVSQLR…YEFTSDDVVV (86 aa). The [2Fe-2S] cluster site is built by Cys217, His219, Cys236, His239, and Ser241. Cys222 and Cys238 are disulfide-bonded.

It belongs to the Rieske iron-sulfur protein family. In terms of assembly, component of the ubiquinol-cytochrome c oxidoreductase (cytochrome b-c1 complex, complex III, CIII), a multisubunit enzyme composed of 11 subunits. The complex is composed of 3 respiratory subunits cytochrome b, cytochrome c1 and Rieske protein UQCRFS1, 2 core protein subunits UQCRC1/QCR1 and UQCRC2/QCR2, and 6 low-molecular weight protein subunits UQCRH/QCR6, UQCRB/QCR7, UQCRQ/QCR8, UQCR10/QCR9, UQCR11/QCR10 and subunit 9, the cleavage product of Rieske protein UQCRFS1. The complex exists as an obligatory dimer and forms supercomplexes (SCs) in the inner mitochondrial membrane with NADH-ubiquinone oxidoreductase (complex I, CI) and cytochrome c oxidase (complex IV, CIV), resulting in different assemblies (supercomplex SCI(1)III(2)IV(1) and megacomplex MCI(2)III(2)IV(2)). Incorporation of the Rieske protein UQCRFS1 is the penultimate step in complex III assembly. Interacts with TTC19, which is involved in the clearance of UQCRFS1 fragments. As to quaternary structure, component of the ubiquinol-cytochrome c oxidoreductase (cytochrome b-c1 complex, complex III, CIII). Subunit 9 corresponds to the mitochondrial targeting sequence (MTS) of Rieske protein UQCRFS1. It is retained after processing and incorporated inside complex III, where it remains bound to the complex and localizes between the 2 core subunits UQCRC1/QCR1 and UQCRC2/QCR2. [2Fe-2S] cluster serves as cofactor. In terms of processing, proteolytic processing is necessary for the correct insertion of UQCRFS1 in the complex III dimer. Several fragments are generated during UQCRFS1 insertion, most probably due to the endogenous matrix-processing peptidase (MPP) activity of the 2 core protein subunits UQCRC1/QCR1 and UQCRC2/QCR2, which are homologous to the 2 mitochondrial-processing peptidase (MPP) subunits beta-MPP and alpha-MPP respectively. The action of the protease is also necessary for the clearance of the UQCRFS1 fragments.

It localises to the mitochondrion inner membrane. The catalysed reaction is a quinol + 2 Fe(III)-[cytochrome c](out) = a quinone + 2 Fe(II)-[cytochrome c](out) + 2 H(+)(out). Functionally, component of the ubiquinol-cytochrome c oxidoreductase, a multisubunit transmembrane complex that is part of the mitochondrial electron transport chain which drives oxidative phosphorylation. The respiratory chain contains 3 multisubunit complexes succinate dehydrogenase (complex II, CII), ubiquinol-cytochrome c oxidoreductase (cytochrome b-c1 complex, complex III, CIII) and cytochrome c oxidase (complex IV, CIV), that cooperate to transfer electrons derived from NADH and succinate to molecular oxygen, creating an electrochemical gradient over the inner membrane that drives transmembrane transport and the ATP synthase. The cytochrome b-c1 complex catalyzes electron transfer from ubiquinol to cytochrome c, linking this redox reaction to translocation of protons across the mitochondrial inner membrane, with protons being carried across the membrane as hydrogens on the quinol. In the process called Q cycle, 2 protons are consumed from the matrix, 4 protons are released into the intermembrane space and 2 electrons are passed to cytochrome c. The Rieske protein is a catalytic core subunit containing a [2Fe-2S] iron-sulfur cluster. It cycles between 2 conformational states during catalysis to transfer electrons from the quinol bound in the Q(0) site in cytochrome b to cytochrome c1. Incorporation of UQCRFS1 is the penultimate step in complex III assembly. Its function is as follows. Component of the ubiquinol-cytochrome c oxidoreductase (cytochrome b-c1 complex, complex III, CIII). UQCRFS1 undergoes proteolytic processing once it is incorporated in the complex III dimer. One of the fragments, called subunit 9, corresponds to its mitochondrial targeting sequence (MTS). The proteolytic processing is necessary for the correct insertion of UQCRFS1 in the complex III dimer, but the persistence of UQCRFS1-derived fragments may prevent newly imported UQCRFS1 to be processed and assembled into complex III and is detrimental for the complex III structure and function. This is Cytochrome b-c1 complex subunit Rieske, mitochondrial from Mus musculus (Mouse).